Here is a 595-residue protein sequence, read N- to C-terminus: Coronatine-insensitive protein homolog 1a (595 aa).

An F-box domain is found at 20-62 (WVPDEALHLVMGHVEDPRDREAASRVCRRWHRIDALTRKHVTV). The jasmonate site is built by R90, R351, Y389, R412, and R499.

Interacts with TIFY6A/JAZ3, TIFY6B/JAZ4 and TIFY11D/JAZ12 in a coronatine-dependent manner. Interacts with TIFY9/JAZ5, TIFY10A/JAZ6, TIFY10B/JAZ7, TIFY11A/JAZ9 and TIFY11C/JAZ11 in a coronatine-dependent manner.

Functionally, involved in jasmonate (JA) signaling. Required for jasmonate signaling in plant defense responses. Can complement Arabidopsis coi1-1 mutant and restore jasmonate signaling. Required for JA-regulated defense responses to infestation by the leaffolder Cnaphalocrocis medinalis. May act on an initial response of jasmonate-regulated gene expression toward drought tolerance as part of a BHLH148-TIFY11D/JAZ12-COI1A complex. Component of SCF(COI1) E3 ubiquitin ligase complexes, which may mediate the ubiquitination and subsequent proteasomal degradation of target proteins, including TIFY/JAZ family. In Oryza sativa subsp. indica (Rice), this protein is Coronatine-insensitive protein homolog 1a.